A 458-amino-acid polypeptide reads, in one-letter code: UDP-N-acetylmuramate--L-alanine ligase (458 aa).

Residue 112 to 118 (GMHGKTT) participates in ATP binding.

It belongs to the MurCDEF family.

It localises to the cytoplasm. The enzyme catalyses UDP-N-acetyl-alpha-D-muramate + L-alanine + ATP = UDP-N-acetyl-alpha-D-muramoyl-L-alanine + ADP + phosphate + H(+). Its pathway is cell wall biogenesis; peptidoglycan biosynthesis. Its function is as follows. Cell wall formation. This chain is UDP-N-acetylmuramate--L-alanine ligase, found in Acidobacterium capsulatum (strain ATCC 51196 / DSM 11244 / BCRC 80197 / JCM 7670 / NBRC 15755 / NCIMB 13165 / 161).